The primary structure comprises 141 residues: 4-hydroxybenzoyl-CoA thioesterase (141 aa).

The active site involves Asp-17. Substrate-binding positions include Trp-47, 59–61, and Lys-90; that span reads TPI.

This sequence belongs to the 4-hydroxybenzoyl-CoA thioesterase family. As to quaternary structure, homotetramer.

The enzyme catalyses 4-hydroxybenzoyl-CoA + H2O = 4-hydroxybenzoate + CoA + H(+). The protein operates within xenobiotic degradation; 4-chlorobenzoate degradation; 4-hydroxybenzoate from 4-chlorobenzoate: step 3/3. With respect to regulation, unaffected by EDTA, Mg(2+), Mn(2+), Fe(2+), Ca(2+), Co(2+) and Zn(2+). In terms of biological role, hydrolyzes 4-hydroxybenzoate-CoA, and to a lesser extent benzoyl-CoA and 4-chlorobenzoate-CoA. Not active against aliphatic acyl-CoA thioesters, including palmitoyl-CoA, hexanoyl-CoA and acetyl-CoA. The chain is 4-hydroxybenzoyl-CoA thioesterase from Pseudomonas sp. (strain CBS-3).